We begin with the raw amino-acid sequence, 612 residues long: Actin-binding LIM protein 2 (612 aa).

LIM zinc-binding domains lie at Ile22–Thr81, Thr81–Gly141, Arg151–Ile210, and Ile210–Glu270. Residues Cys83, Cys86, His103, Cys106, Cys109, Cys112, Cys131, and Cys134 each coordinate Zn(2+). Residues Cys212, Cys215, His232, Cys235, Cys238, Cys241, His260, and Cys263 each contribute to the Zn(2+) site. Over residues Thr269–Thr278 the composition is skewed to basic and acidic residues. 2 disordered regions span residues Thr269–Pro295 and Ala341–Tyr433. 2 stretches are compositionally biased toward low complexity: residues Ser279 to Pro295 and Ser364 to Ser373. Phosphoserine is present on residues Ser282, Ser294, Ser365, and Ser368. Residues Ser394–Gln416 show a composition bias toward polar residues. Position 453 is a phosphoserine (Ser453). Residues Ala471–Arg520 form a disordered region. A Phosphothreonine modification is found at Thr473. Ser477 and Ser579 each carry phosphoserine. A compositionally biased stretch (low complexity) spans Ser477–Ser489. The region spanning Thr544–Phe612 is the HP domain.

Interacts with F-actin and ABRA.

Its subcellular location is the cytoplasm. In terms of biological role, may act as scaffold protein. May stimulate ABRA activity and ABRA-dependent SRF transcriptional activity. This Rattus norvegicus (Rat) protein is Actin-binding LIM protein 2 (Ablim2).